A 662-amino-acid chain; its full sequence is Sporulation protein RMD8 (662 aa).

Disordered stretches follow at residues Met-1 to Lys-136, Tyr-286 to Pro-320, and Leu-346 to Phe-406. Ser-2 bears the N-acetylserine mark. The segment covering Ser-99–Ser-121 has biased composition (basic and acidic residues). The segment covering Tyr-286 to Val-304 has biased composition (polar residues). A compositionally biased stretch (low complexity) spans Ser-383–Thr-395. A helical membrane pass occupies residues Val-630–Thr-647.

It belongs to the RMD1/sif2 family.

It localises to the membrane. Functionally, required for sporulation. This is Sporulation protein RMD8 (RMD8) from Saccharomyces cerevisiae (strain ATCC 204508 / S288c) (Baker's yeast).